Reading from the N-terminus, the 419-residue chain is Keratin, type I cytoskeletal 47 kDa (419 aa).

A head region spans residues 1-81 (MSFRSSSSYS…SSSFSNFGGN (81 aa)). Residues 82–117 (DKQTMQNLNDRLASYLEKVRALEAANADLELKIREW) form a coil 1A region. In terms of domain architecture, IF rod spans 82–397 (DKQTMQNLND…RLLEGEFGSL (316 aa)). The tract at residues 118-139 (YEKQKGSGIGAGSKDFSKYFEI) is linker 1. The interval 140–231 (ISDLRNKILS…KNHEEEMSIA (92 aa)) is coil 1B. The segment at 232–254 (KSSSAGQVNVEMDAAPGIDLNKI) is linker 12. Residues 255 to 393 (LSDMRADYET…ETYRRLLEGE (139 aa)) are coil 2. Residues 394–419 (FGSLKSSIVQATEVSTSQSSSSSKKD) are tail.

This sequence belongs to the intermediate filament family. In terms of assembly, heterotetramer of two type I and two type II keratins.

The polypeptide is Keratin, type I cytoskeletal 47 kDa (xk81b2) (Xenopus laevis (African clawed frog)).